A 192-amino-acid chain; its full sequence is Ribosomal RNA large subunit methyltransferase E (192 aa).

The S-adenosyl-L-methionine site is built by glycine 48, phenylalanine 50, aspartate 67, aspartate 85, and aspartate 107. Residue lysine 147 is the Proton acceptor of the active site.

It belongs to the class I-like SAM-binding methyltransferase superfamily. RNA methyltransferase RlmE family.

It localises to the cytoplasm. The catalysed reaction is uridine(2552) in 23S rRNA + S-adenosyl-L-methionine = 2'-O-methyluridine(2552) in 23S rRNA + S-adenosyl-L-homocysteine + H(+). Its function is as follows. Specifically methylates the uridine in position 2552 of 23S rRNA at the 2'-O position of the ribose in the fully assembled 50S ribosomal subunit. In Borrelia garinii subsp. bavariensis (strain ATCC BAA-2496 / DSM 23469 / PBi) (Borreliella bavariensis), this protein is Ribosomal RNA large subunit methyltransferase E.